The sequence spans 276 residues: Tryptophan synthase alpha chain (276 aa).

Active-site proton acceptor residues include Glu49 and Asp60.

It belongs to the TrpA family. In terms of assembly, tetramer of two alpha and two beta chains.

It carries out the reaction (1S,2R)-1-C-(indol-3-yl)glycerol 3-phosphate + L-serine = D-glyceraldehyde 3-phosphate + L-tryptophan + H2O. It participates in amino-acid biosynthesis; L-tryptophan biosynthesis; L-tryptophan from chorismate: step 5/5. The alpha subunit is responsible for the aldol cleavage of indoleglycerol phosphate to indole and glyceraldehyde 3-phosphate. This is Tryptophan synthase alpha chain from Corynebacterium aurimucosum (strain ATCC 700975 / DSM 44827 / CIP 107346 / CN-1) (Corynebacterium nigricans).